The following is a 1434-amino-acid chain: DNA-directed RNA polymerase subunit beta' (1434 aa).

Positions 70, 72, 85, and 88 each coordinate Zn(2+). Mg(2+) contacts are provided by D460, D462, and D464. Residues C840, C914, C921, and C924 each coordinate Zn(2+).

This sequence belongs to the RNA polymerase beta' chain family. In terms of assembly, the RNAP catalytic core consists of 2 alpha, 1 beta, 1 beta' and 1 omega subunit. When a sigma factor is associated with the core the holoenzyme is formed, which can initiate transcription. Mg(2+) is required as a cofactor. The cofactor is Zn(2+).

It catalyses the reaction RNA(n) + a ribonucleoside 5'-triphosphate = RNA(n+1) + diphosphate. DNA-dependent RNA polymerase catalyzes the transcription of DNA into RNA using the four ribonucleoside triphosphates as substrates. In Tolumonas auensis (strain DSM 9187 / NBRC 110442 / TA 4), this protein is DNA-directed RNA polymerase subunit beta'.